A 393-amino-acid polypeptide reads, in one-letter code: Formate-dependent phosphoribosylglycinamide formyltransferase (393 aa).

Residues 22–23 (EL) and Glu-82 contribute to the N(1)-(5-phospho-beta-D-ribosyl)glycinamide site. ATP contacts are provided by residues Arg-114, Lys-155, 160 to 165 (SSGKGQ), 195 to 198 (ESFV), and Glu-203. The region spanning 119–308 (RLAAEELGLR…EFALHVRAVL (190 aa)) is the ATP-grasp domain. 2 residues coordinate Mg(2+): Glu-267 and Glu-279. N(1)-(5-phospho-beta-D-ribosyl)glycinamide-binding positions include Asp-286, Lys-356, and 363-364 (RR).

This sequence belongs to the PurK/PurT family. Homodimer.

The catalysed reaction is N(1)-(5-phospho-beta-D-ribosyl)glycinamide + formate + ATP = N(2)-formyl-N(1)-(5-phospho-beta-D-ribosyl)glycinamide + ADP + phosphate + H(+). Its pathway is purine metabolism; IMP biosynthesis via de novo pathway; N(2)-formyl-N(1)-(5-phospho-D-ribosyl)glycinamide from N(1)-(5-phospho-D-ribosyl)glycinamide (formate route): step 1/1. In terms of biological role, involved in the de novo purine biosynthesis. Catalyzes the transfer of formate to 5-phospho-ribosyl-glycinamide (GAR), producing 5-phospho-ribosyl-N-formylglycinamide (FGAR). Formate is provided by PurU via hydrolysis of 10-formyl-tetrahydrofolate. This is Formate-dependent phosphoribosylglycinamide formyltransferase from Oleidesulfovibrio alaskensis (strain ATCC BAA-1058 / DSM 17464 / G20) (Desulfovibrio alaskensis).